We begin with the raw amino-acid sequence, 353 residues long: Nicotinate-nucleotide--dimethylbenzimidazole phosphoribosyltransferase (353 aa).

Catalysis depends on E318, which acts as the Proton acceptor.

It belongs to the CobT family.

The enzyme catalyses 5,6-dimethylbenzimidazole + nicotinate beta-D-ribonucleotide = alpha-ribazole 5'-phosphate + nicotinate + H(+). It participates in nucleoside biosynthesis; alpha-ribazole biosynthesis; alpha-ribazole from 5,6-dimethylbenzimidazole: step 1/2. In terms of biological role, catalyzes the synthesis of alpha-ribazole-5'-phosphate from nicotinate mononucleotide (NAMN) and 5,6-dimethylbenzimidazole (DMB). This is Nicotinate-nucleotide--dimethylbenzimidazole phosphoribosyltransferase from Roseiflexus castenholzii (strain DSM 13941 / HLO8).